The sequence spans 610 residues: Oxidoreductase ptaE (610 aa).

The signal sequence occupies residues 1 to 20 (MFQSILFLAFYGRPVFGSAA). Plastocyanin-like domains lie at 67 to 181 (QIIS…HGPS) and 191 to 344 (PWLL…IVRY). Residues Asn105, Asn111, Asn262, Asn277, Asn330, Asn356, Asn401, Asn409, Asn427, and Asn602 are each glycosylated (N-linked (GlcNAc...) asparagine). The 144-residue stretch at 425–568 (YVNWSEPSVK…IAIQFLEQPS (144 aa)) folds into the Plastocyanin-like 3 domain.

Belongs to the multicopper oxidase family.

Its pathway is secondary metabolite biosynthesis. In terms of biological role, oxidoreductase; part of the gene cluster that mediates the biosynthesis of pestheic acid, a diphenyl ether which is a biosynthetic precursor of the unique chloropupukeananes. The biosynthesis initiates from condensation of acetate and malonate units catalyzed by the non-reducing PKS ptaA. As the ptaA protein is TE/CLC domain-deficient, hydrolysis and Claisen cyclization of the polyketide could be catalyzed by ptaB containing a beta-lactamase domain. The ptaB protein might hydrolyze the thioester bond between the ACP of ptaA and the intermediate to release atrochrysone carboxylic acid, which is spontaneously dehydrated to form endocrocin anthrone. Endocrocin anthrone is then converted to endocrocin, catalyzed by the anthrone oxygenase ptaC. Spontaneous decarboxylation of endocrocin occurs to generate emodin. An O-methyltransferase (ptaH or ptaI) could methylate emodin to form physcion. PtaJ could then catalyze the oxidative cleavage of physcion, and rotation of the intermediate could then afford desmethylisosulochrin. PtaF, a putative NADH-dependent oxidoreductase, might also participate in the oxidative cleavage step. Desmethylisosulochrin is then transformed by another O-methyltransferase (ptaH or ptaI) to form isosulochrin. Chlorination of isosulochrin by ptaM in the cyclohexadienone B ring then produces chloroisosulochrin. PtaE is responsible for the oxidative coupling reactions of both benzophenones isosulouchrin and chloroisosulochrin to RES-1214-1 and pestheic acid respectively, regardless of chlorination. The sequence is that of Oxidoreductase ptaE from Pestalotiopsis fici (strain W106-1 / CGMCC3.15140).